A 295-amino-acid chain; its full sequence is Glucose-1-phosphate thymidylyltransferase (295 aa).

The Mg(2+) site is built by aspartate 111 and aspartate 226.

The protein belongs to the glucose-1-phosphate thymidylyltransferase family. In terms of assembly, homotetramer. The cofactor is Mg(2+).

It carries out the reaction dTTP + alpha-D-glucose 1-phosphate + H(+) = dTDP-alpha-D-glucose + diphosphate. It participates in carbohydrate biosynthesis; dTDP-L-rhamnose biosynthesis. The protein operates within bacterial outer membrane biogenesis; LPS O-antigen biosynthesis. Catalyzes the formation of dTDP-glucose, from dTTP and glucose 1-phosphate, as well as its pyrophosphorolysis. This chain is Glucose-1-phosphate thymidylyltransferase (rmlA), found in Xanthomonas campestris pv. campestris (strain B100).